Here is an 88-residue protein sequence, read N- to C-terminus: Fe-S protein maturation auxiliary factor SufT (88 aa).

Belongs to the MIP18 family.

Involved in the maturation of iron-sulfur (Fe-S) proteins. May function as a Fe-S cluster carrier. Is required for S.aureus growth under conditions that impose a high demand for lipoic acid, likely via a role in the maturation of the lipoate synthase LipA. Is non-essential for growth in conditions that impose a low demand for lipoic acid or Fe-S clusters, such as fermentative growth. Also seems to be involved in the maturation of AcnA, LeuCD and IlvD proteins, that utilize Fe-S cluster cofactors, and its role increases under conditions of high-demand for Fe-S clusters (respiratory growth). Is not involved in the repair of Fe-S clusters damaged by reactive oxygen species or in the physical protection of Fe-S clusters from oxidants. Displays synergy with the Fe-S cluster carrier Nfu. The polypeptide is Fe-S protein maturation auxiliary factor SufT (Staphylococcus aureus (strain USA300)).